Reading from the N-terminus, the 321-residue chain is Malate dehydrogenase (321 aa).

NAD(+) contacts are provided by residues 10 to 15 (GAGQIG) and Asp34. Arg83 and Arg89 together coordinate substrate. NAD(+) is bound by residues Asn96 and 119–121 (ITN). Asn121 and Arg152 together coordinate substrate. The active-site Proton acceptor is the His176.

It belongs to the LDH/MDH superfamily. MDH type 3 family.

The catalysed reaction is (S)-malate + NAD(+) = oxaloacetate + NADH + H(+). Functionally, catalyzes the reversible oxidation of malate to oxaloacetate. In Xanthobacter autotrophicus (strain ATCC BAA-1158 / Py2), this protein is Malate dehydrogenase.